The sequence spans 202 residues: IMP cyclohydrolase (202 aa).

It belongs to the archaeal IMP cyclohydrolase family.

The enzyme catalyses IMP + H2O = 5-formamido-1-(5-phospho-D-ribosyl)imidazole-4-carboxamide. It participates in purine metabolism; IMP biosynthesis via de novo pathway; IMP from 5-formamido-1-(5-phospho-D-ribosyl)imidazole-4-carboxamide: step 1/1. Functionally, catalyzes the cyclization of 5-formylamidoimidazole-4-carboxamide ribonucleotide to IMP. This is IMP cyclohydrolase (purO) from Methanocaldococcus jannaschii (strain ATCC 43067 / DSM 2661 / JAL-1 / JCM 10045 / NBRC 100440) (Methanococcus jannaschii).